We begin with the raw amino-acid sequence, 269 residues long: Formamidopyrimidine-DNA glycosylase (269 aa).

Catalysis depends on proline 2, which acts as the Schiff-base intermediate with DNA. Glutamate 3 serves as the catalytic Proton donor. Catalysis depends on lysine 57, which acts as the Proton donor; for beta-elimination activity. The DNA site is built by histidine 90, arginine 109, and lysine 150. Residues glutamine 235 to histidine 269 form an FPG-type zinc finger. The active-site Proton donor; for delta-elimination activity is arginine 259.

Belongs to the FPG family. As to quaternary structure, monomer. Requires Zn(2+) as cofactor.

The enzyme catalyses Hydrolysis of DNA containing ring-opened 7-methylguanine residues, releasing 2,6-diamino-4-hydroxy-5-(N-methyl)formamidopyrimidine.. It carries out the reaction 2'-deoxyribonucleotide-(2'-deoxyribose 5'-phosphate)-2'-deoxyribonucleotide-DNA = a 3'-end 2'-deoxyribonucleotide-(2,3-dehydro-2,3-deoxyribose 5'-phosphate)-DNA + a 5'-end 5'-phospho-2'-deoxyribonucleoside-DNA + H(+). Functionally, involved in base excision repair of DNA damaged by oxidation or by mutagenic agents. Acts as a DNA glycosylase that recognizes and removes damaged bases. Has a preference for oxidized purines, such as 7,8-dihydro-8-oxoguanine (8-oxoG). Has AP (apurinic/apyrimidinic) lyase activity and introduces nicks in the DNA strand. Cleaves the DNA backbone by beta-delta elimination to generate a single-strand break at the site of the removed base with both 3'- and 5'-phosphates. The chain is Formamidopyrimidine-DNA glycosylase from Sodalis glossinidius (strain morsitans).